The sequence spans 581 residues: Arginine--tRNA ligase (581 aa).

The short motif at 126 to 136 (PNLAKEMHVGH) is the 'HIGH' region element.

This sequence belongs to the class-I aminoacyl-tRNA synthetase family. In terms of assembly, monomer.

Its subcellular location is the cytoplasm. It catalyses the reaction tRNA(Arg) + L-arginine + ATP = L-arginyl-tRNA(Arg) + AMP + diphosphate. The chain is Arginine--tRNA ligase from Shewanella piezotolerans (strain WP3 / JCM 13877).